A 481-amino-acid chain; its full sequence is ADAMTS-like protein 5 (481 aa).

The N-terminal stretch at 1 to 42 is a signal peptide; that stretch reads MGKLRPGRVEWLASGHTERPHLFQNLLLFLWALLNCGLGVSA. The 53-residue stretch at 45–97 folds into the TSP type-1 domain; sequence PGEWTPWVSWTRCSSSCGRGVSVRSRRCLRLPGEEPCWGDSHEYRLCQLPDCP. 3 disulfides stabilise this stretch: Cys-57–Cys-91, Cys-61–Cys-96, and Cys-72–Cys-81. The N-linked (GlcNAc...) asparagine glycan is linked to Asn-218. Residues 331 to 361 are disordered; sequence QPQPRGVEPQPPAAPAVTPAQTPTLAPDPCP. The span at 345 to 355 shows a compositional bias: low complexity; sequence PAVTPAQTPTL. 3 disulfide bridges follow: Cys-360–Cys-425, Cys-363–Cys-427, and Cys-377–Cys-479. One can recognise an NTR domain in the interval 360–479; the sequence is CPPCPDTRGR…SRIRLTARRC (120 aa).

As to quaternary structure, interacts with heparin, FBN1 and FBN2. In terms of processing, proteolytically cleaved to release a C-terminal fragment containing the NTR domain. Contains at least one additional N-linked glycosylation site.

The protein localises to the secreted. Its subcellular location is the extracellular space. It localises to the extracellular matrix. In terms of biological role, may play a role in modulation of fibrillin microfibrils in the extracellular matrix (ECM). In Homo sapiens (Human), this protein is ADAMTS-like protein 5 (ADAMTSL5).